The following is a 101-amino-acid chain: NADH-quinone oxidoreductase subunit K (101 aa).

3 consecutive transmembrane segments (helical) span residues 4–24 (LAHF…GIFL), 30–50 (IVLL…FVAF), and 61–81 (VFVF…LAIL).

This sequence belongs to the complex I subunit 4L family. In terms of assembly, NDH-1 is composed of 14 different subunits. Subunits NuoA, H, J, K, L, M, N constitute the membrane sector of the complex.

The protein localises to the cell inner membrane. The catalysed reaction is a quinone + NADH + 5 H(+)(in) = a quinol + NAD(+) + 4 H(+)(out). Functionally, NDH-1 shuttles electrons from NADH, via FMN and iron-sulfur (Fe-S) centers, to quinones in the respiratory chain. The immediate electron acceptor for the enzyme in this species is believed to be ubiquinone. Couples the redox reaction to proton translocation (for every two electrons transferred, four hydrogen ions are translocated across the cytoplasmic membrane), and thus conserves the redox energy in a proton gradient. In Cupriavidus metallidurans (strain ATCC 43123 / DSM 2839 / NBRC 102507 / CH34) (Ralstonia metallidurans), this protein is NADH-quinone oxidoreductase subunit K.